Here is a 475-residue protein sequence, read N- to C-terminus: Trifunctional enzyme subunit beta, mitochondrial (475 aa).

The N-terminal 34 residues, 1–34 (MTTILTSTFRNLSTTSKWALRFSVRPLSCSSQVQ), are a transit peptide targeting the mitochondrion. At lysine 53 the chain carries N6-succinyllysine. At lysine 73 the chain carries N6-acetyllysine; alternate. Lysine 73 bears the N6-succinyllysine; alternate mark. The active-site Acyl-thioester intermediate is cysteine 139. Residues 174 to 221 (IRHSRNMRKMMLDLNKAKTLAQRLSLLTKFRLNFLSPELPAVAEFSTN) lie within the membrane without spanning it. Lysine 189 bears the N6-acetyllysine; alternate mark. Residue lysine 189 is modified to N6-succinyllysine; alternate. An N6-succinyllysine mark is found at lysine 191, lysine 273, and lysine 292. The residue at position 294 (lysine 294) is an N6-acetyllysine; alternate. At lysine 294 the chain carries N6-succinyllysine; alternate. Lysine 299 is modified (N6-acetyllysine). Lysine 333 bears the N6-acetyllysine; alternate mark. The residue at position 333 (lysine 333) is an N6-succinyllysine; alternate. An N6-acetyllysine mark is found at lysine 349 and lysine 362. Cysteine 459 (proton donor/acceptor) is an active-site residue.

It belongs to the thiolase-like superfamily. Thiolase family. In terms of assembly, heterotetramer of 2 alpha/HADHA and 2 beta/HADHB subunits; forms the mitochondrial trifunctional enzyme. Also purified as higher order heterooligomers including a 4 alpha/HADHA and 4 beta/HADHB heterooligomer which physiological significance remains unclear. The mitochondrial trifunctional enzyme interacts with MTLN. Interacts with RSAD2/viperin.

The protein resides in the mitochondrion. Its subcellular location is the mitochondrion inner membrane. It is found in the mitochondrion outer membrane. It localises to the endoplasmic reticulum. The enzyme catalyses an acyl-CoA + acetyl-CoA = a 3-oxoacyl-CoA + CoA. It carries out the reaction butanoyl-CoA + acetyl-CoA = 3-oxohexanoyl-CoA + CoA. It catalyses the reaction hexanoyl-CoA + acetyl-CoA = 3-oxooctanoyl-CoA + CoA. The catalysed reaction is octanoyl-CoA + acetyl-CoA = 3-oxodecanoyl-CoA + CoA. The enzyme catalyses decanoyl-CoA + acetyl-CoA = 3-oxododecanoyl-CoA + CoA. It carries out the reaction dodecanoyl-CoA + acetyl-CoA = 3-oxotetradecanoyl-CoA + CoA. It catalyses the reaction tetradecanoyl-CoA + acetyl-CoA = 3-oxohexadecanoyl-CoA + CoA. It functions in the pathway lipid metabolism; fatty acid beta-oxidation. Its function is as follows. Mitochondrial trifunctional enzyme catalyzes the last three of the four reactions of the mitochondrial beta-oxidation pathway. The mitochondrial beta-oxidation pathway is the major energy-producing process in tissues and is performed through four consecutive reactions breaking down fatty acids into acetyl-CoA. Among the enzymes involved in this pathway, the trifunctional enzyme exhibits specificity for long-chain fatty acids. Mitochondrial trifunctional enzyme is a heterotetrameric complex composed of two proteins, the trifunctional enzyme subunit alpha/HADHA carries the 2,3-enoyl-CoA hydratase and the 3-hydroxyacyl-CoA dehydrogenase activities, while the trifunctional enzyme subunit beta/HADHB described here bears the 3-ketoacyl-CoA thiolase activity. This chain is Trifunctional enzyme subunit beta, mitochondrial (Hadhb), found in Rattus norvegicus (Rat).